Consider the following 443-residue polypeptide: Mitochondrial enolase superfamily member 1 (443 aa).

Residues 24 to 26 and Y34 each bind substrate; that span reads GAD. S148 carries the post-translational modification Phosphoserine. Residue K220 participates in substrate binding. The Proton donor/acceptor role is filled by K222. D250 is a Mg(2+) binding site. Substrate contacts are provided by residues N252, E276, E305, 355 to 357, and E386; that span reads HAG. Positions 276 and 305 each coordinate Mg(2+). H355 is an active-site residue.

Belongs to the mandelate racemase/muconate lactonizing enzyme family. ENOSF1 subfamily. Mg(2+) is required as a cofactor. Post-translationally, could be sumoylated.

The protein localises to the mitochondrion. The enzyme catalyses L-fuconate = 2-dehydro-3-deoxy-L-fuconate + H2O. In terms of biological role, plays a role in the catabolism of L-fucose, a sugar that is part of the carbohydrates that are attached to cellular glycoproteins. Catalyzes the dehydration of L-fuconate to 2-keto-3-deoxy-L-fuconate by the abstraction of the 2-proton to generate an enediolate intermediate that is stabilized by the magnesium ion. This Homo sapiens (Human) protein is Mitochondrial enolase superfamily member 1 (ENOSF1).